The sequence spans 101 residues: 2-amino-4-ketopentanoate thiolase alpha subunit (101 aa).

It belongs to the OrtA family. In terms of assembly, heterodimer with OrtB.

The catalysed reaction is D-alanine + acetyl-CoA = (2R)-2-amino-4-oxopentanoate + CoA. Its function is as follows. Involved in the ornithine fermentation pathway. Catalyzes the thiolytic cleavage of 2-amino-4-ketopentanoate (AKP) with coenzyme A (CoA) to form acetyl-CoA and alanine. It is strictly specific for AKP. The polypeptide is 2-amino-4-ketopentanoate thiolase alpha subunit (Unknown prokaryotic organism).